Consider the following 339-residue polypeptide: Acyl-CoA dehydrogenase FadE28 (339 aa).

FAD-binding residues include Arg227, Gln238, His295, and Gly299.

It belongs to the acyl-CoA dehydrogenase family. As to quaternary structure, heterotetramer composed of FadE28 and FadE29. FAD serves as cofactor.

It carries out the reaction 3-oxochol-4-en-22-oyl-CoA + A = 3-oxochola-4,17-dien-22-oyl-CoA + AH2. Its pathway is steroid metabolism; cholesterol degradation. Functionally, involved in the third cycle of side chain dehydrogenation in the beta-oxidation of cholesterol catabolism. May play an important role for the initial macrophage invasion, possibly in response to the acidification of phagosome. It contributes partly to the virulence by increasing the efficiency of beta-oxidation. Catalyzes the dehydrogenation of 2'-propanoyl-CoA ester side chains of 3-oxo-4-pregnene-20-carboxyl-CoA (3-OPC-CoA) to yield 3-oxo-4,17-pregnadiene-20-carboxyl-CoA (3-OPDC-CoA). Also able to dehydrogenate steroyl-CoA such as 3-oxo-chol-4-en-24-oyl-CoA (3-OCO-CoA), 1beta-(2'-propanoyl-CoA)-3a-alpha-H-7a-beta-methylhexahydro-4-indanone (indanone-CoA ester), hexahydroindanone and pregenenone. In Mycobacterium tuberculosis (strain ATCC 25618 / H37Rv), this protein is Acyl-CoA dehydrogenase FadE28 (fadE28).